Reading from the N-terminus, the 399-residue chain is Myb-related transcription factor, partner of profilin (399 aa).

One can recognise a Myb-like domain in the interval 12–84 (TTRLRKPRFS…EVQKRWNDFK (73 aa)). The short motif at 83–86 (FKRR) is the Nuclear localization signal element. Disordered stretches follow at residues 87 to 108 (TKEKLARVPHSTQGAGPAAEDA), 127 to 261 (PGAG…PSLD), 297 to 332 (LLPGTPVDSLPPPLPPPPPPPPPPRPVLPPPAPKVE), and 358 to 399 (APRS…WKSP). Residues 127-136 (PGAGAGAEEP) show a composition bias toward low complexity. The span at 137 to 149 (PAAPSSQPPPPSA) shows a compositional bias: pro residues. The span at 156–170 (LSEDRREDRRADTSA) shows a compositional bias: basic and acidic residues. Pro residues-rich tracts occupy residues 219–252 (SPPPPAPPLPPPPPLAQVAPSPPSPPPPPRPPPT), 305–329 (SLPPPLPPPPPPPPPPRPVLPPPAP), and 366–377 (PRPPPAPLPPHD). Residues 381–399 (HKRRKGFPTRKRRGRWKSP) show a composition bias toward basic residues. 2 consecutive short sequence motifs (nuclear localization signal) follow at residues 382–385 (KRRK) and 390–393 (RKRR).

In terms of assembly, interacts with PFN1. Homodimer and heterodimer with PFN1.

It is found in the nucleus. In terms of biological role, transcriptional repressor; DNA-binding protein that specifically recognizes the core sequence 5'-YAAC[GT]G-3'. Dimerization with PFN1 reduces its DNA-binding capacity. The polypeptide is Myb-related transcription factor, partner of profilin (MYPOP) (Homo sapiens (Human)).